Reading from the N-terminus, the 173-residue chain is Crossover junction endodeoxyribonuclease RuvC (173 aa).

Catalysis depends on residues aspartate 8, glutamate 67, and aspartate 139. The Mg(2+) site is built by aspartate 8, glutamate 67, and aspartate 139.

Belongs to the RuvC family. Homodimer which binds Holliday junction (HJ) DNA. The HJ becomes 2-fold symmetrical on binding to RuvC with unstacked arms; it has a different conformation from HJ DNA in complex with RuvA. In the full resolvosome a probable DNA-RuvA(4)-RuvB(12)-RuvC(2) complex forms which resolves the HJ. The cofactor is Mg(2+).

It localises to the cytoplasm. It carries out the reaction Endonucleolytic cleavage at a junction such as a reciprocal single-stranded crossover between two homologous DNA duplexes (Holliday junction).. The RuvA-RuvB-RuvC complex processes Holliday junction (HJ) DNA during genetic recombination and DNA repair. Endonuclease that resolves HJ intermediates. Cleaves cruciform DNA by making single-stranded nicks across the HJ at symmetrical positions within the homologous arms, yielding a 5'-phosphate and a 3'-hydroxyl group; requires a central core of homology in the junction. The consensus cleavage sequence is 5'-(A/T)TT(C/G)-3'. Cleavage occurs on the 3'-side of the TT dinucleotide at the point of strand exchange. HJ branch migration catalyzed by RuvA-RuvB allows RuvC to scan DNA until it finds its consensus sequence, where it cleaves and resolves the cruciform DNA. In Shewanella piezotolerans (strain WP3 / JCM 13877), this protein is Crossover junction endodeoxyribonuclease RuvC.